Here is a 209-residue protein sequence, read N- to C-terminus: MTLAKDIARDLLDIKAVYLKPEEPFTWASGIKSPIYTDNRITLSYPETRTLIENGFVETIKEAFPEVEVIAGTATAGIPHGAIIADKMNLPFAYIRSKPKDHGAGNQIEGRVTKGQKMVIIEDLISTGGSVLDAVAAAQREGADVLGVVAIFTYELPKATANFEKASVKLVTLSNYSELIKVAKVQGYIDADGLTLLKKFKENQETWQD.

5-phospho-alpha-D-ribose 1-diphosphate is bound by residues arginine 96, lysine 100, histidine 102, and 122-130; that span reads EDLISTGGS. Orotate is bound at residue serine 126.

This sequence belongs to the purine/pyrimidine phosphoribosyltransferase family. PyrE subfamily. Homodimer. Mg(2+) is required as a cofactor.

It carries out the reaction orotidine 5'-phosphate + diphosphate = orotate + 5-phospho-alpha-D-ribose 1-diphosphate. Its pathway is pyrimidine metabolism; UMP biosynthesis via de novo pathway; UMP from orotate: step 1/2. Functionally, catalyzes the transfer of a ribosyl phosphate group from 5-phosphoribose 1-diphosphate to orotate, leading to the formation of orotidine monophosphate (OMP). This Streptococcus mutans serotype c (strain ATCC 700610 / UA159) protein is Orotate phosphoribosyltransferase.